The following is a 782-amino-acid chain: General transcription and DNA repair factor IIH helicase/translocase subunit XPB (782 aa).

Over residues 1 to 11 (MGKRDRADRDK) the composition is skewed to basic and acidic residues. 2 disordered regions span residues 1-51 (MGKR…ESGT) and 220-240 (ISKT…DPQG). Residues 6-18 (RADRDKKKSRKRH) carry the Nuclear localization signal motif. Positions 21–30 (DEEDDEEDAP) are enriched in acidic residues. Positions 327-488 (MFGNGRARSG…DLNFLIGPKL (162 aa)) constitute a Helicase ATP-binding domain. 340 to 347 (LPCGAGKS) contributes to the ATP binding site. The short motif at 441-444 (DEVH) is the DEVH box element. Residues 542–702 (RACQFLIKFH…LAGMEEEDLA (161 aa)) form the Helicase C-terminal domain. At Ser-686 the chain carries Phosphoserine. At Ser-751 the chain carries Phosphoserine; by CK2.

Belongs to the helicase family. RAD25/XPB subfamily. Component of the 7-subunit TFIIH core complex composed of XPB/ERCC3, XPD/ERCC2, GTF2H1, GTF2H2, GTF2H3, GTF2H4 and GTF2H5, which is active in NER. The core complex associates with the 3-subunit CDK-activating kinase (CAK) module composed of CCNH/cyclin H, CDK7 and MNAT1 to form the 10-subunit holoenzyme (holo-TFIIH) active in transcription. Interacts with PUF60. Interacts with ATF7IP. Interacts with KAT2A; leading to KAT2A recruitment to promoters and acetylation of histones. Part of TBP-based Pol II pre-initiation complex (PIC), in which Pol II core assembles with general transcription factors and other specific initiation factors including GTF2E1, GTF2E2, GTF2F1, GTF2F2, TCEA1, ERCC2, ERCC3, GTF2H2, GTF2H3, GTF2H4, GTF2H5, GTF2A1, GTF2A2, GTF2B and TBP; this large multi-subunit PIC complex mediates DNA unwinding and targets Pol II core to the transcription start site where the first phosphodiester bond forms. In terms of processing, phosphorylation on Ser-751 by CK2 controls the 5'-excision activity of ERCC1-XPF endonuclease; phosphorylated protein inhibits the excision activity and thus NER. Dephosphorylation reactivates the 5'-excision step. Phosphorylation has no effect on transcription or the 3'-5' helicase activity.

The protein resides in the nucleus. It catalyses the reaction Couples ATP hydrolysis with the unwinding of duplex DNA by translocating in the 3'-5' direction.. The catalysed reaction is ATP + H2O = ADP + phosphate + H(+). Phosphorylation on Ser-751 by CK2 controls the 5'-excision activity of ERCC1-XPF endonuclease; phosphorylated protein inhibits the excision activity and thus NER. ATPase activity is stimulated by TFIIH subunit p52 (GTF2H4). DNA translocase activity by this subunit in TFIIH is stimulated by XPA, ERCC5/XPG and XFP plus ERCC1. Functionally, ATP-dependent 3'-5' DNA helicase/translocase; binds dsDNA rather than ssDNA, unzipping it in a translocase rather than classical helicase activity. Component of the general transcription and DNA repair factor IIH (TFIIH) core complex. When complexed to CDK-activating kinase (CAK), involved in RNA transcription by RNA polymerase II. The ATPase activity of XPB/ERCC3, but not its helicase activity, is required for DNA opening; it may wrap around the damaged DNA wedging it open, causing localized melting and twisting that allows XPD/ERCC2 helicase to anchor. The ATP-dependent helicase activity of XPB/ERCC3 may be required for promoter escape. Also involved in transcription-coupled nucleotide excision repair (NER) of damaged DNA. In NER, TFIIH acts by opening DNA around the lesion to allow the excision of the damaged oligonucleotide and its replacement by a new DNA fragment. The structure of the TFIIH transcription complex differs from the NER-TFIIH complex; large movements by XPD/ERCC2 and XPB/ERCC3 are stabilized by XPA. The sequence is that of General transcription and DNA repair factor IIH helicase/translocase subunit XPB (ERCC3) from Macaca fascicularis (Crab-eating macaque).